Consider the following 22-residue polypeptide: Superoxide dismutase [Cu-Zn] (22 aa).

The protein belongs to the Cu-Zn superoxide dismutase family. In terms of assembly, homodimer. Cu cation serves as cofactor. It depends on Zn(2+) as a cofactor.

It is found in the cytoplasm. The catalysed reaction is 2 superoxide + 2 H(+) = H2O2 + O2. Its function is as follows. Destroys radicals which are normally produced within the cells and which are toxic to biological systems. The protein is Superoxide dismutase [Cu-Zn] of Hordeum vulgare (Barley).